A 693-amino-acid chain; its full sequence is MIEMARLRVYELARKLNMSPKELLQELEELGVNVKSHMSYVDEEMANIIIDLLEEDNRKAKQPSKPKKEKGEEEVEKEVVEKKKKKKITLKPDELKLDIIAEKIGVPQNKIIQDMFVKRGIALRPGQILKLEEVEQILKEYKIEIEIEEEQQTSVEEVDEFELLEKRYQELYEKEKDKLVPRPPVVTVMGHVDHGKTTLLDRIRSTRVAEREEGGITQSIGAYQVEVNGKKITFIDTPGHELFTEMRARGAQATDIVVLVVAADDGVMPQTIEAYNHAKAANVPIIVAINKIDKPNANVEKTKQELVEKLGLIPEEWGGDTIVVPISARTGQGVDELLEMILLVAEMNEIKCYPEGPARAVIIESKLDKKMGPVASVIVKDGVLKVGDAVVASNTYGRVRNLFDDNMRPIREAYPSQPVMILGFEDVPDVHSNVYVVESAEKAKEIVEKRLQRLEAQKQSRKHINLEELMKMMQEKEKKVLNLILKADTYGSVAALKNAINKLQSKEIELNIVHAGVGEISTSDVMLAAAVDGVILGFRVKVNNQARRLAEQEGVDVRTYSIIYKLVEDLKLALEGMLEPEEVEEVIGHGEIRKVFKISKVGKVAGVQMLDGKADRNGFVRIYRNGQLVFEGKIESLKHYKEDVNVVEAPQECGIKFAGFDDIQEGDELEFYVIRKVKRKPTFVEEQADQEQK.

Residues 181 to 349 form the tr-type G domain; sequence PRPPVVTVMG…MILLVAEMNE (169 aa). Positions 190–197 are G1; that stretch reads GHVDHGKT. A GTP-binding site is contributed by 190–197; the sequence is GHVDHGKT. The tract at residues 215-219 is G2; that stretch reads GITQS. A G3 region spans residues 236–239; sequence DTPG. GTP-binding positions include 236 to 240 and 290 to 293; these read DTPGH and NKID. Positions 290-293 are G4; the sequence is NKID. The interval 327–329 is G5; it reads SAR.

The protein belongs to the TRAFAC class translation factor GTPase superfamily. Classic translation factor GTPase family. IF-2 subfamily.

It is found in the cytoplasm. Its function is as follows. One of the essential components for the initiation of protein synthesis. Protects formylmethionyl-tRNA from spontaneous hydrolysis and promotes its binding to the 30S ribosomal subunits. Also involved in the hydrolysis of GTP during the formation of the 70S ribosomal complex. The chain is Translation initiation factor IF-2 from Thermotoga petrophila (strain ATCC BAA-488 / DSM 13995 / JCM 10881 / RKU-1).